The sequence spans 379 residues: Chaperone protein DnaJ (379 aa).

In terms of domain architecture, J spans 5-70 (DYYEILEVSR…EKRAAYDRYG (66 aa)). The CR-type zinc-finger motif lies at 135-213 (GIKVPISYVT…CGGSGRVRNE (79 aa)). Zn(2+) is bound by residues cysteine 148, cysteine 151, cysteine 165, cysteine 168, cysteine 187, cysteine 190, cysteine 201, and cysteine 204. CXXCXGXG motif repeat units follow at residues 148–155 (CSSCSGIG), 165–172 (CGNCNGAG), 187–194 (CNVCNGEG), and 201–208 (CRRCGGSG).

The protein belongs to the DnaJ family. In terms of assembly, homodimer. It depends on Zn(2+) as a cofactor.

The protein localises to the cytoplasm. Functionally, participates actively in the response to hyperosmotic and heat shock by preventing the aggregation of stress-denatured proteins and by disaggregating proteins, also in an autonomous, DnaK-independent fashion. Unfolded proteins bind initially to DnaJ; upon interaction with the DnaJ-bound protein, DnaK hydrolyzes its bound ATP, resulting in the formation of a stable complex. GrpE releases ADP from DnaK; ATP binding to DnaK triggers the release of the substrate protein, thus completing the reaction cycle. Several rounds of ATP-dependent interactions between DnaJ, DnaK and GrpE are required for fully efficient folding. Also involved, together with DnaK and GrpE, in the DNA replication of plasmids through activation of initiation proteins. The protein is Chaperone protein DnaJ of Anaplasma marginale (strain Florida).